Consider the following 290-residue polypeptide: Probable proteasome subunit beta type-6 (290 aa).

The protein belongs to the peptidase T1B family. As to quaternary structure, the 26S proteasome consists of a 20S proteasome core and two 19S regulatory subunits. The 20S proteasome core is composed of 28 subunits that are arranged in four stacked rings, resulting in a barrel-shaped structure. The two end rings are each formed by seven alpha subunits, and the two central rings are each formed by seven beta subunits. The catalytic chamber with the active sites is on the inside of the barrel.

It is found in the cytoplasm. It localises to the nucleus. In terms of biological role, non-catalytic component of the proteasome which degrades poly-ubiquitinated proteins in the cytoplasm and in the nucleus. It is essential for the regulated turnover of proteins and for the removal of misfolded proteins. The proteasome is a multicatalytic proteinase complex that is characterized by its ability to cleave peptides with Arg, Phe, Tyr, Leu, and Glu adjacent to the leaving group at neutral or slightly basic pH. It has an ATP-dependent proteolytic activity. This Encephalitozoon cuniculi (strain GB-M1) (Microsporidian parasite) protein is Probable proteasome subunit beta type-6 (PRE7).